Reading from the N-terminus, the 650-residue chain is Kinesin-like protein KIF22-B (650 aa).

The Kinesin motor domain maps to 31 to 359 (RVRVAVRLRP…LNFAAKSKQI (329 aa)). 116–123 (GPTGAGKT) contacts ATP. A disordered region spans residues 365 to 416 (SRETTQTVAQPAMKRPREEAEATTSSRQRKKSKTDSTESSPNSSMESTGKRK). Low complexity predominate over residues 401–411 (TESSPNSSMES). Residues 452 to 498 (KRERMALLKKWEESQMEIERLKEKQKELEQKAMEAEARLEKSNNSDL) adopt a coiled-coil conformation. Positions 560-563 (GHEN) match the Important for regulated proteolytic degradation motif.

The protein belongs to the TRAFAC class myosin-kinesin ATPase superfamily. Kinesin family. Post-translationally, ubiquitinated, leading to its subsequent proteasomal degradation.

The protein resides in the nucleus. Its subcellular location is the cytoplasm. It localises to the cytoskeleton. Its function is as follows. Kinesin family member that is involved in spindle formation and the movements of chromosomes during mitosis and meiosis. Binds to microtubules and to DNA. This chain is Kinesin-like protein KIF22-B (kif22-b), found in Xenopus laevis (African clawed frog).